A 216-amino-acid chain; its full sequence is MIDRDPIDVFNNTLVPMVVEQTNRGERSYDIYSRLLKERIIFLTGQVHDGVASLICAQLLFLESENPSKDISFYINSPGGVVTSGMAIYDTMQYIRSPVSTVCIGQAASMGSLLLCAGEAGKRYATPNARIMIHQPSGGFQGQAADIEIQAREILALRERLNRIYVKHTGQPLETIERAMDRDNYMTAEESRAFGLTDSVIERRALSDDGDTKSSS.

Serine 109 (nucleophile) is an active-site residue. The active site involves histidine 134.

The protein belongs to the peptidase S14 family. Fourteen ClpP subunits assemble into 2 heptameric rings which stack back to back to give a disk-like structure with a central cavity, resembling the structure of eukaryotic proteasomes.

It localises to the cytoplasm. The enzyme catalyses Hydrolysis of proteins to small peptides in the presence of ATP and magnesium. alpha-casein is the usual test substrate. In the absence of ATP, only oligopeptides shorter than five residues are hydrolyzed (such as succinyl-Leu-Tyr-|-NHMec, and Leu-Tyr-Leu-|-Tyr-Trp, in which cleavage of the -Tyr-|-Leu- and -Tyr-|-Trp bonds also occurs).. Its function is as follows. Cleaves peptides in various proteins in a process that requires ATP hydrolysis. Has a chymotrypsin-like activity. Plays a major role in the degradation of misfolded proteins. The protein is ATP-dependent Clp protease proteolytic subunit of Rhodospirillum rubrum (strain ATCC 11170 / ATH 1.1.1 / DSM 467 / LMG 4362 / NCIMB 8255 / S1).